We begin with the raw amino-acid sequence, 45 residues long: Photosystem II reaction center protein K (45 aa).

Residues 1–8 constitute a propeptide that is removed on maturation; that stretch reads MNSALFLA. The helical transmembrane segment at 23–43 threads the bilayer; that stretch reads ILPVIPVFFLLLAFVWQAAIG.

This sequence belongs to the PsbK family. PSII is composed of 1 copy each of membrane proteins PsbA, PsbB, PsbC, PsbD, PsbE, PsbF, PsbH, PsbI, PsbJ, PsbK, PsbL, PsbM, PsbT, PsbX, PsbY, PsbZ, Psb30/Ycf12, at least 3 peripheral proteins of the oxygen-evolving complex and a large number of cofactors. It forms dimeric complexes.

The protein localises to the plastid. It localises to the chloroplast thylakoid membrane. Its function is as follows. One of the components of the core complex of photosystem II (PSII). PSII is a light-driven water:plastoquinone oxidoreductase that uses light energy to abstract electrons from H(2)O, generating O(2) and a proton gradient subsequently used for ATP formation. It consists of a core antenna complex that captures photons, and an electron transfer chain that converts photonic excitation into a charge separation. This is Photosystem II reaction center protein K from Porphyra purpurea (Red seaweed).